The primary structure comprises 255 residues: NADPH-dependent FMN reductase ArsH (255 aa).

43–50 (SLRARSFS) provides a ligand contact to FMN.

It belongs to the ArsH family. In terms of assembly, homotetramer. It depends on FMN as a cofactor.

In terms of biological role, has NADPH-dependent FMN reductase activity and very low azoreductase activity. No activity with NADH. This Shigella flexneri protein is NADPH-dependent FMN reductase ArsH.